A 233-amino-acid chain; its full sequence is uncharacterized protein (233 aa).

3 helical membrane passes run 4–24 (LAIL…NHDT), 35–55 (FGQL…ILQS), and 66–86 (IAIW…RFEL).

Its subcellular location is the cell membrane. This is an uncharacterized protein from Sinorhizobium sp.